The sequence spans 844 residues: Patched-related protein 9 (844 aa).

In terms of domain architecture, SSD spans 264–421 (LIPWMPWTSL…VTFFNAVMSL (158 aa)).

The protein belongs to the patched family.

The chain is Patched-related protein 9 (ptr-9) from Caenorhabditis elegans.